The sequence spans 134 residues: YGPNLPGCPPGPYPRICARYCHSDRECKAGYYCCNTGCLNICVPKPKPGLCPAIRPGPCKGNVCSNDQDCPGNQKCCGKPGCRRCYRPEKPGSCPPRKYDAGVCVIYCVGDFDCPGNEKCCGSCPRRCEKPCFD.

WAP domains lie at 2–45, 46–89, and 90–132; these read GPNL…CVPK, PKPG…YRPE, and KPGS…EKPC. 12 cysteine pairs are disulfide-bonded: Cys8–Cys34, Cys17–Cys38, Cys21–Cys33, Cys27–Cys42, Cys51–Cys77, Cys59–Cys82, Cys64–Cys76, Cys70–Cys85, Cys94–Cys121, Cys104–Cys124, Cys108–Cys120, and Cys114–Cys128.

As to expression, nacreous layer of shell.

Its function is as follows. Inhibits growth of calcium carbonate crystals. May inhibit growth of certain crystallographic planes in the mineral phase of nacre in the shell. The protein is Perlwapin of Haliotis laevigata (Smooth Australian abalone).